The chain runs to 1262 residues: DNA-directed RNA polymerase subunit beta' (1262 aa).

Residues Cys-220, Cys-294, Cys-301, and Cys-304 each coordinate Zn(2+).

This sequence belongs to the RNA polymerase beta' chain family. RpoC2 subfamily. As to quaternary structure, in cyanobacteria the RNAP catalytic core is composed of 2 alpha, 1 beta, 1 beta', 1 gamma and 1 omega subunit. When a sigma factor is associated with the core the holoenzyme is formed, which can initiate transcription. Requires Zn(2+) as cofactor.

The enzyme catalyses RNA(n) + a ribonucleoside 5'-triphosphate = RNA(n+1) + diphosphate. Its function is as follows. DNA-dependent RNA polymerase catalyzes the transcription of DNA into RNA using the four ribonucleoside triphosphates as substrates. The chain is DNA-directed RNA polymerase subunit beta' from Gloeobacter violaceus (strain ATCC 29082 / PCC 7421).